A 341-amino-acid polypeptide reads, in one-letter code: Paired box protein Pax-9 (341 aa).

The paired DNA-binding region spans 4–130 (AFGEVNQLGG…SSISRILRNK (127 aa)). A PAI subdomain region spans residues 7–63 (EVNQLGGVFVNGRPLPNAIRLRIVELAQLGIRPCDISRQLRVSHGCVSKILARYNET). Residues 82–130 (TVVKHIRTYKQRDPGIFAWEIRDRLLADGVCDKYNVPSVSSISRILRNK) are RED subdomain. An interaction with KDM5B region spans residues 168–189 (AAAAKVPTPPGVPAIPGSVAMP).

In terms of assembly, interacts with KDM5B.

The protein localises to the nucleus. Transcription factor required for normal development of thymus, parathyroid glands, ultimobranchial bodies, teeth, skeletal elements of skull and larynx as well as distal limbs. This Macaca mulatta (Rhesus macaque) protein is Paired box protein Pax-9 (PAX9).